Here is a 178-residue protein sequence, read N- to C-terminus: Protein GrpE (178 aa).

The segment at 1–22 (MSENQNPSPSPEEIEAAMSANA) is disordered.

It belongs to the GrpE family. As to quaternary structure, homodimer.

Its subcellular location is the cytoplasm. Functionally, participates actively in the response to hyperosmotic and heat shock by preventing the aggregation of stress-denatured proteins, in association with DnaK and GrpE. It is the nucleotide exchange factor for DnaK and may function as a thermosensor. Unfolded proteins bind initially to DnaJ; upon interaction with the DnaJ-bound protein, DnaK hydrolyzes its bound ATP, resulting in the formation of a stable complex. GrpE releases ADP from DnaK; ATP binding to DnaK triggers the release of the substrate protein, thus completing the reaction cycle. Several rounds of ATP-dependent interactions between DnaJ, DnaK and GrpE are required for fully efficient folding. The sequence is that of Protein GrpE from Acidovorax ebreus (strain TPSY) (Diaphorobacter sp. (strain TPSY)).